The primary structure comprises 355 residues: Protein RecA (355 aa).

67–74 (GPESSGKT) contacts ATP.

This sequence belongs to the RecA family.

Its subcellular location is the cytoplasm. Its function is as follows. Can catalyze the hydrolysis of ATP in the presence of single-stranded DNA, the ATP-dependent uptake of single-stranded DNA by duplex DNA, and the ATP-dependent hybridization of homologous single-stranded DNAs. It interacts with LexA causing its activation and leading to its autocatalytic cleavage. This Histophilus somni (strain 2336) (Haemophilus somnus) protein is Protein RecA.